The following is an 816-amino-acid chain: Mechanosensitive cation channel TMEM63B (816 aa).

Residues methionine 1–glycine 46 are Extracellular-facing. Residues valine 47–valine 71 traverse the membrane as a helical segment. Residues cysteine 57 and cysteine 119 are each lipidated (S-palmitoyl cysteine). Residues alanine 72–glycine 138 lie on the Cytoplasmic side of the membrane. Residues glycine 139–phenylalanine 171 traverse the membrane as a helical segment. Residues serine 172–asparagine 195 are Extracellular-facing. A helical transmembrane segment spans residues asparagine 196–threonine 220. Residues serine 221–glycine 420 are Cytoplasmic-facing. The segment at arginine 224 to arginine 419 is intracellular linker IL2; confers mechanosensitivity. 2 S-palmitoyl cysteine lipidation sites follow: cysteine 375 and cysteine 391. Residues phenylalanine 421 to threonine 450 traverse the membrane as a helical segment. Residues methionine 451–asparagine 465 are Extracellular-facing. The helical transmembrane segment at proline 466 to glutamate 495 threads the bilayer. The Cytoplasmic segment spans residues alanine 496–threonine 499. A helical membrane pass occupies residues arginine 500–tryptophan 536. Residues leucine 537–glycine 559 are Extracellular-facing. A helical membrane pass occupies residues alanine 560–cysteine 592. A gating helix region spans residues alanine 560–cysteine 592. The Cytoplasmic segment spans residues leucine 593–glutamine 612. Residues phenylalanine 613–serine 631 form a helical membrane-spanning segment. The Extracellular portion of the chain corresponds to isoleucine 632 to cysteine 634. A helical transmembrane segment spans residues proline 635 to alanine 659. Residues tyrosine 660 to aspartate 666 lie on the Cytoplasmic side of the membrane. The chain crosses the membrane as a helical span at residues lysine 667–arginine 695. Residues threonine 696–alanine 700 lie on the Extracellular side of the membrane. A helical membrane pass occupies residues proline 701–valine 721. S-palmitoyl cysteine attachment occurs at residues cysteine 719 and cysteine 722. Residues cysteine 722 to glutamine 816 are Cytoplasmic-facing.

It belongs to the CSC1 (TC 1.A.17) family. As to quaternary structure, monomer. In terms of processing, palmitoylation is required for localization to the plasma membrane and stability.

The protein localises to the cell membrane. It is found in the lysosome membrane. Its subcellular location is the early endosome membrane. The catalysed reaction is Ca(2+)(in) = Ca(2+)(out). It carries out the reaction Mg(2+)(in) = Mg(2+)(out). The enzyme catalyses K(+)(in) = K(+)(out). It catalyses the reaction Na(+)(in) = Na(+)(out). The catalysed reaction is Cs(+)(in) = Cs(+)(out). Mechanosensitive cation channel with low conductance and high activation threshold. Osmosensitive cation channel preferentially activated by hypotonic stress. Also acts as a phospholipid scramblase in response to changes in membrane structure: upon changes in membrane curvature and thickness, alters its conformation and translocates phospholipids, thereby controlling plasma membrane lipid distribution. The chain is Mechanosensitive cation channel TMEM63B from Gallus gallus (Chicken).